The chain runs to 354 residues: Peptide chain release factor 1 (354 aa).

An N5-methylglutamine modification is found at Q230. Positions 282–301 are disordered; sequence KQASDAIKKQMIGSGDRSER.

Belongs to the prokaryotic/mitochondrial release factor family. Post-translationally, methylated by PrmC. Methylation increases the termination efficiency of RF1.

It is found in the cytoplasm. Functionally, peptide chain release factor 1 directs the termination of translation in response to the peptide chain termination codons UAG and UAA. The sequence is that of Peptide chain release factor 1 from Leptospira borgpetersenii serovar Hardjo-bovis (strain L550).